The sequence spans 344 residues: Acireductone dioxygenase (344 aa).

Positions 92, 94, 98, and 137 each coordinate Fe(2+). Residues His92, His94, Glu98, and His137 each coordinate Ni(2+).

This sequence belongs to the acireductone dioxygenase (ARD) family. Fe(2+) is required as a cofactor. Requires Ni(2+) as cofactor.

Its subcellular location is the cytoplasm. It is found in the nucleus. It catalyses the reaction 1,2-dihydroxy-5-(methylsulfanyl)pent-1-en-3-one + O2 = 4-methylsulfanyl-2-oxobutanoate + formate + 2 H(+). The enzyme catalyses 1,2-dihydroxy-5-(methylsulfanyl)pent-1-en-3-one + O2 = 3-(methylsulfanyl)propanoate + CO + formate + 2 H(+). Its pathway is amino-acid biosynthesis; L-methionine biosynthesis via salvage pathway; L-methionine from S-methyl-5-thio-alpha-D-ribose 1-phosphate: step 5/6. Catalyzes 2 different reactions between oxygen and the acireductone 1,2-dihydroxy-3-keto-5-methylthiopentene (DHK-MTPene) depending upon the metal bound in the active site. Fe-containing acireductone dioxygenase (Fe-ARD) produces formate and 2-keto-4-methylthiobutyrate (KMTB), the alpha-ketoacid precursor of methionine in the methionine recycle pathway. Ni-containing acireductone dioxygenase (Ni-ARD) produces methylthiopropionate, carbon monoxide and formate, and does not lie on the methionine recycle pathway. The protein is Acireductone dioxygenase of Leishmania infantum.